We begin with the raw amino-acid sequence, 470 residues long: Argininosuccinate lyase (470 aa).

Belongs to the lyase 1 family. Argininosuccinate lyase subfamily.

It localises to the cytoplasm. The catalysed reaction is 2-(N(omega)-L-arginino)succinate = fumarate + L-arginine. It participates in amino-acid biosynthesis; L-arginine biosynthesis; L-arginine from L-ornithine and carbamoyl phosphate: step 3/3. The chain is Argininosuccinate lyase from Mycobacterium marinum (strain ATCC BAA-535 / M).